We begin with the raw amino-acid sequence, 283 residues long: Digeranylgeranylglyceryl phosphate synthase (283 aa).

8 helical membrane-spanning segments follow: residues 21–41 (ITASIGGIIGYLISSNFEIDI), 45–65 (LLVFFVVFFVCAYGNVINDIF), 97–117 (LILGLVLSLFINIYALIIAVI), 135–155 (IGNFIIGYLTGSVFLFGGVAG), 158–178 (VMPVVILFLCSLLSIWGREIV), 204–224 (LYFATFLVVLAVILSPLPYIL), 226–246 (IFGIWYLILIAICDILFIYAM), and 261–281 (VSKFLKIIMNIVLLAFIVGAI).

Belongs to the UbiA prenyltransferase family. DGGGP synthase subfamily. The cofactor is Mg(2+).

It localises to the cell membrane. The catalysed reaction is sn-3-O-(geranylgeranyl)glycerol 1-phosphate + (2E,6E,10E)-geranylgeranyl diphosphate = 2,3-bis-O-(geranylgeranyl)-sn-glycerol 1-phosphate + diphosphate. It functions in the pathway membrane lipid metabolism; glycerophospholipid metabolism. In terms of biological role, prenyltransferase that catalyzes the transfer of the geranylgeranyl moiety of geranylgeranyl diphosphate (GGPP) to the C2 hydroxyl of (S)-3-O-geranylgeranylglyceryl phosphate (GGGP). This reaction is the second ether-bond-formation step in the biosynthesis of archaeal membrane lipids. The chain is Digeranylgeranylglyceryl phosphate synthase from Methanocaldococcus jannaschii (strain ATCC 43067 / DSM 2661 / JAL-1 / JCM 10045 / NBRC 100440) (Methanococcus jannaschii).